A 247-amino-acid polypeptide reads, in one-letter code: ATP synthase subunit a, chloroplastic (247 aa).

The next 5 helical transmembrane spans lie at 38–58, 95–115, 134–154, 199–219, and 220–240; these read QVLI…FIAV, VPFI…GALL, INTT…AGLS, LVVV…VMFL, and GLFT…AYIG.

This sequence belongs to the ATPase A chain family. F-type ATPases have 2 components, CF(1) - the catalytic core - and CF(0) - the membrane proton channel. CF(1) has five subunits: alpha(3), beta(3), gamma(1), delta(1), epsilon(1). CF(0) has four main subunits: a, b, b' and c.

The protein resides in the plastid. It localises to the chloroplast thylakoid membrane. Key component of the proton channel; it plays a direct role in the translocation of protons across the membrane. The sequence is that of ATP synthase subunit a, chloroplastic from Citrus sinensis (Sweet orange).